A 237-amino-acid chain; its full sequence is MQFSPTNGDFTFVSSTDAEELSGTIDAPDITLNMGPESNRDTYATTFLRQRGYGWLLEVEEEESEDTKPLLEELDIDLKDIYYKIRCVLMPMPSLGFNRQVVRDNPDFWGPLAVVLLFSMISIYGQFRVVSWIITIWIFGSLTIFLLARVLGGEVSYGQVLGVIGYSLLPLIVIAPLLLVIGGFEVVSTLIKLFGVFWAAYSAASLLVGDEFKTKKPLLIYPIFLLYIYFLSLYTGV.

At 1–106 (MQFSPTNGDF…FNRQVVRDNP (106 aa)) the chain is on the cytoplasmic side. The helical transmembrane segment at 107 to 127 (DFWGPLAVVLLFSMISIYGQF) threads the bilayer. The Lumenal portion of the chain corresponds to 128-131 (RVVS). The chain crosses the membrane as a helical span at residues 132–152 (WIITIWIFGSLTIFLLARVLG). The Cytoplasmic segment spans residues 153-160 (GEVSYGQV). A helical transmembrane segment spans residues 161-181 (LGVIGYSLLPLIVIAPLLLVI). Residues 182–188 (GGFEVVS) are Lumenal-facing. The chain crosses the membrane as a helical span at residues 189-209 (TLIKLFGVFWAAYSAASLLVG). The Cytoplasmic segment spans residues 210–216 (DEFKTKK). The helical transmembrane segment at 217-237 (PLLIYPIFLLYIYFLSLYTGV) threads the bilayer.

It belongs to the YIP1 family.

It is found in the golgi apparatus. The protein localises to the cis-Golgi network membrane. Involved in the maintenance of the Golgi structure. This chain is Protein YIPF4 (yipf4), found in Danio rerio (Zebrafish).